Reading from the N-terminus, the 317-residue chain is o-succinylbenzoate synthase (317 aa).

Residues 71 to 73 (NAT) and Lys-95 contribute to the 2-succinylbenzoate site. The active-site Proton donor is the Lys-97. Mg(2+) contacts are provided by Asp-128, Glu-154, and Asp-177. 128–130 (DVN) contacts 2-succinylbenzoate. Position 201 (Lys-201) interacts with 2-succinylbenzoate. Lys-201 serves as the catalytic Proton acceptor.

It belongs to the mandelate racemase/muconate lactonizing enzyme family. MenC type 1 subfamily. Monomer. A divalent metal cation serves as cofactor.

The enzyme catalyses (1R,6R)-6-hydroxy-2-succinyl-cyclohexa-2,4-diene-1-carboxylate = 2-succinylbenzoate + H2O. It participates in quinol/quinone metabolism; 1,4-dihydroxy-2-naphthoate biosynthesis; 1,4-dihydroxy-2-naphthoate from chorismate: step 4/7. It functions in the pathway quinol/quinone metabolism; menaquinone biosynthesis. In terms of biological role, converts 2-succinyl-6-hydroxy-2,4-cyclohexadiene-1-carboxylate (SHCHC) to 2-succinylbenzoate (OSB). Does not show N-succinylamino acid racemase (NSAR) activity with N-succinyl-L-phenylglycine as substrate. This is o-succinylbenzoate synthase from Thermobifida fusca (strain YX).